A 98-amino-acid polypeptide reads, in one-letter code: Integration host factor subunit beta (98 aa).

The protein belongs to the bacterial histone-like protein family. As to quaternary structure, heterodimer of an alpha and a beta chain.

In terms of biological role, this protein is one of the two subunits of integration host factor, a specific DNA-binding protein that functions in genetic recombination as well as in transcriptional and translational control. The polypeptide is Integration host factor subunit beta (Pseudomonas fluorescens (strain Pf0-1)).